The primary structure comprises 85 residues: Conotoxin Lt28.2 (85 aa).

Positions Met-1–Ala-21 are cleaved as a signal peptide. Residues Val-22–Lys-40 constitute a propeptide that is removed on maturation.

The protein belongs to the conotoxin D superfamily. Contains 5 disulfide bonds. In terms of tissue distribution, expressed by the venom duct.

It localises to the secreted. Functionally, probable neurotoxin. In Conus litteratus (Lettered cone), this protein is Conotoxin Lt28.2.